Consider the following 475-residue polypeptide: UDP-N-acetylmuramate--L-alanine ligase (475 aa).

Position 114–120 (114–120) interacts with ATP; it reads GTHGKTT.

This sequence belongs to the MurCDEF family.

The protein localises to the cytoplasm. It catalyses the reaction UDP-N-acetyl-alpha-D-muramate + L-alanine + ATP = UDP-N-acetyl-alpha-D-muramoyl-L-alanine + ADP + phosphate + H(+). It participates in cell wall biogenesis; peptidoglycan biosynthesis. Cell wall formation. The protein is UDP-N-acetylmuramate--L-alanine ligase of Bartonella bacilliformis (strain ATCC 35685 / KC583 / Herrer 020/F12,63).